The primary structure comprises 176 residues: Cytochrome b (176 aa).

3 helical membrane passes run 33 to 53 (FGSL…FLAM), 77 to 98 (WVLR…YLHV), and 113 to 133 (WNMG…GYVL). Heme b is bound by residues H83 and H97.

Belongs to the cytochrome b family. The cytochrome bc1 complex contains 11 subunits: 3 respiratory subunits (MT-CYB, CYC1 and UQCRFS1), 2 core proteins (UQCRC1 and UQCRC2) and 6 low-molecular weight proteins (UQCRH/QCR6, UQCRB/QCR7, UQCRQ/QCR8, UQCR10/QCR9, UQCR11/QCR10 and a cleavage product of UQCRFS1). This cytochrome bc1 complex then forms a dimer. Heme b is required as a cofactor.

The protein localises to the mitochondrion inner membrane. Component of the ubiquinol-cytochrome c reductase complex (complex III or cytochrome b-c1 complex) that is part of the mitochondrial respiratory chain. The b-c1 complex mediates electron transfer from ubiquinol to cytochrome c. Contributes to the generation of a proton gradient across the mitochondrial membrane that is then used for ATP synthesis. The sequence is that of Cytochrome b (MT-CYB) from Nycticeius humeralis (Evening bat).